The sequence spans 343 residues: ATP-dependent 6-phosphofructokinase (343 aa).

Residues glycine 10, arginine 73–valine 74, and glycine 103–threonine 106 contribute to the ATP site. Glutamate 104 is a Mg(2+) binding site. Substrate is bound by residues threonine 126–aspartate 128, arginine 163, methionine 170–arginine 172, glutamate 223, arginine 267, and histidine 273–arginine 276. Residue aspartate 128 is the Proton acceptor of the active site.

This sequence belongs to the phosphofructokinase type A (PFKA) family. Mixed-substrate PFK group III subfamily. As to quaternary structure, homodimer or homotetramer. Mg(2+) is required as a cofactor.

Its subcellular location is the cytoplasm. The enzyme catalyses beta-D-fructose 6-phosphate + ATP = beta-D-fructose 1,6-bisphosphate + ADP + H(+). It carries out the reaction D-tagatofuranose 6-phosphate + ATP = D-tagatofuranose 1,6-bisphosphate + ADP + H(+). It functions in the pathway carbohydrate degradation; glycolysis; D-glyceraldehyde 3-phosphate and glycerone phosphate from D-glucose: step 3/4. In terms of biological role, catalyzes the phosphorylation of D-fructose 6-phosphate to fructose 1,6-bisphosphate by ATP, the first committing step of glycolysis. Can also catalyze the phosphorylation of tagatose-6-phosphate. The sequence is that of ATP-dependent 6-phosphofructokinase from Mycobacterium tuberculosis (strain CDC 1551 / Oshkosh).